The primary structure comprises 318 residues: MSALVGNARTSDPAAFGRVAVLLGGTSSEREVSLNSGGNVLDALRARGVDAQPVDGIPALAKALVAQQFDRVFNVLHGHNGGGEDGIVQGLMEAFGVPYTGSDVLGSALSMDKIRTKQVWLSLGLSTPRYARLAAGASAEDIHAAARQIGLPIIVKPANEGSSVGVSRVFDQAQLEEAVTLAARYDGALLMEQLIEGDELTVAVLGDTALPSIRIVPKGQWYDYNAKYIADDTQYLCPGLEGEAEAQIRQLALDAFRAAGCRGWGRVDVMRDGSSGQLYLLEVNTAPGMTSHSLVPKAARQLGIDFETLVWRVLEQTL.

In terms of domain architecture, ATP-grasp spans 117-315 (KQVWLSLGLS…FETLVWRVLE (199 aa)). Residue 146–201 (ARQIGLPIIVKPANEGSSVGVSRVFDQAQLEEAVTLAARYDGALLMEQLIEGDELT) participates in ATP binding. Mg(2+) contacts are provided by Asp-268, Glu-282, and Asn-284.

It belongs to the D-alanine--D-alanine ligase family. Mg(2+) is required as a cofactor. Mn(2+) serves as cofactor.

The protein localises to the cytoplasm. The catalysed reaction is 2 D-alanine + ATP = D-alanyl-D-alanine + ADP + phosphate + H(+). It participates in cell wall biogenesis; peptidoglycan biosynthesis. In terms of biological role, cell wall formation. This is D-alanine--D-alanine ligase from Xanthomonas axonopodis pv. citri (strain 306).